A 345-amino-acid chain; its full sequence is Phosphoribosylformylglycinamidine cyclo-ligase (345 aa).

It belongs to the AIR synthase family.

It is found in the cytoplasm. The enzyme catalyses 2-formamido-N(1)-(5-O-phospho-beta-D-ribosyl)acetamidine + ATP = 5-amino-1-(5-phospho-beta-D-ribosyl)imidazole + ADP + phosphate + H(+). Its pathway is purine metabolism; IMP biosynthesis via de novo pathway; 5-amino-1-(5-phospho-D-ribosyl)imidazole from N(2)-formyl-N(1)-(5-phospho-D-ribosyl)glycinamide: step 2/2. This chain is Phosphoribosylformylglycinamidine cyclo-ligase, found in Anaeromyxobacter sp. (strain K).